A 384-amino-acid chain; its full sequence is Surfeit locus protein 1-like (384 aa).

Helical transmembrane passes span 55 to 75 (ALLW…YKFL), 302 to 322 (IPLD…TCFI), and 338 to 358 (IGVE…TKIY).

This sequence belongs to the SURF1 (TC 3.D.4.8) family.

It localises to the mitochondrion inner membrane. Functionally, may be involved in the biogenesis of the COX complex. This is Surfeit locus protein 1-like from Arabidopsis thaliana (Mouse-ear cress).